We begin with the raw amino-acid sequence, 261 residues long: Glucose 1-dehydrogenase A (261 aa).

11–35 (VITGGSTGLGRAMAVRFGQEEAKVV) is an NADP(+) binding site. Ser145 serves as a coordination point for substrate. Catalysis depends on Tyr158, which acts as the Proton acceptor.

The protein belongs to the short-chain dehydrogenases/reductases (SDR) family. In terms of assembly, homotetramer.

It catalyses the reaction D-glucose + NAD(+) = D-glucono-1,5-lactone + NADH + H(+). It carries out the reaction D-glucose + NADP(+) = D-glucono-1,5-lactone + NADPH + H(+). The chain is Glucose 1-dehydrogenase A (gdhA) from Priestia megaterium (Bacillus megaterium).